We begin with the raw amino-acid sequence, 370 residues long: MNEMTHRTKTRPVKVGNLTIGGNNELIIQSMTTTKTHDVEATVAEIKRLEEAGCQVVRVAVPDERAANAIADIKKQINIPLVADIHFDYRLALKAIEGGIDKVRINPGNIGRRHKVEAVVNAAKERGIPIRIGVNAGSLERHILEKYGYPTADGMVESALHHIKILEDLDFHDIIVSMKASDVNLAIEAYEKAARAFDYPLHLGITESGTLFAGTVKSAAGLGAILNKGIGNTLRISLSADPVEEVKVARELLKSFGLASNAATLISCPTCGRIEIDLISIANEVEEYISTLQVPIKVAVLGCAVNGPGEAREADIGIAGARGEGLLFRKGQVVRKVPEEIMVEELKKEIDVIAAEMAAEREKEKETQEQ.

Residues Cys268, Cys271, Cys303, and Glu310 each contribute to the [4Fe-4S] cluster site.

Belongs to the IspG family. [4Fe-4S] cluster serves as cofactor.

It catalyses the reaction (2E)-4-hydroxy-3-methylbut-2-enyl diphosphate + oxidized [flavodoxin] + H2O + 2 H(+) = 2-C-methyl-D-erythritol 2,4-cyclic diphosphate + reduced [flavodoxin]. It functions in the pathway isoprenoid biosynthesis; isopentenyl diphosphate biosynthesis via DXP pathway; isopentenyl diphosphate from 1-deoxy-D-xylulose 5-phosphate: step 5/6. Its function is as follows. Converts 2C-methyl-D-erythritol 2,4-cyclodiphosphate (ME-2,4cPP) into 1-hydroxy-2-methyl-2-(E)-butenyl 4-diphosphate. This chain is 4-hydroxy-3-methylbut-2-en-1-yl diphosphate synthase (flavodoxin), found in Bacillus anthracis (strain A0248).